A 207-amino-acid chain; its full sequence is Large ribosomal subunit protein uL4 (207 aa).

Polar residues predominate over residues 43 to 52; that stretch reads NKRQGTQSAK. Residues 43-72 form a disordered region; sequence NKRQGTQSAKTRAEVRGGGRKPWKQKGTGR. Residues 60–71 show a composition bias toward basic residues; that stretch reads GGRKPWKQKGTG.

Belongs to the universal ribosomal protein uL4 family. As to quaternary structure, part of the 50S ribosomal subunit.

Functionally, one of the primary rRNA binding proteins, this protein initially binds near the 5'-end of the 23S rRNA. It is important during the early stages of 50S assembly. It makes multiple contacts with different domains of the 23S rRNA in the assembled 50S subunit and ribosome. Forms part of the polypeptide exit tunnel. The polypeptide is Large ribosomal subunit protein uL4 (Alkaliphilus metalliredigens (strain QYMF)).